A 173-amino-acid polypeptide reads, in one-letter code: Bifunctional protein PyrR (173 aa).

The PRPP-binding signature appears at Ile93 to Thr105.

This sequence belongs to the purine/pyrimidine phosphoribosyltransferase family. PyrR subfamily. In terms of assembly, homodimer and homohexamer; in equilibrium.

It catalyses the reaction UMP + diphosphate = 5-phospho-alpha-D-ribose 1-diphosphate + uracil. Regulates transcriptional attenuation of the pyrimidine nucleotide (pyr) operon by binding in a uridine-dependent manner to specific sites on pyr mRNA. This disrupts an antiterminator hairpin in the RNA and favors formation of a downstream transcription terminator, leading to a reduced expression of downstream genes. Its function is as follows. Also displays a weak uracil phosphoribosyltransferase activity which is not physiologically significant. This chain is Bifunctional protein PyrR, found in Streptococcus equi subsp. zooepidemicus (strain H70).